The chain runs to 389 residues: 26S proteasome regulatory subunit 6B homolog (389 aa).

175-182 contributes to the ATP binding site; sequence GPPGTGKT.

This sequence belongs to the AAA ATPase family.

Its subcellular location is the cytoplasm. The protein resides in the nucleus. The 26S proteasome is involved in the ATP-dependent degradation of ubiquitinated proteins. The regulatory (or ATPase) complex confers ATP dependency and substrate specificity to the 26S complex. The protein is 26S proteasome regulatory subunit 6B homolog (rpt3) of Schizosaccharomyces pombe (strain 972 / ATCC 24843) (Fission yeast).